The sequence spans 281 residues: Probable endonuclease 4 (281 aa).

Residues His69, His109, Glu145, Asp179, His182, His216, Asp229, His231, and Glu261 each coordinate Zn(2+).

This sequence belongs to the AP endonuclease 2 family. Requires Zn(2+) as cofactor.

The enzyme catalyses Endonucleolytic cleavage to 5'-phosphooligonucleotide end-products.. Functionally, endonuclease IV plays a role in DNA repair. It cleaves phosphodiester bonds at apurinic or apyrimidinic (AP) sites, generating a 3'-hydroxyl group and a 5'-terminal sugar phosphate. The chain is Probable endonuclease 4 from Nautilia profundicola (strain ATCC BAA-1463 / DSM 18972 / AmH).